A 445-amino-acid polypeptide reads, in one-letter code: GTPase Der (445 aa).

EngA-type G domains follow at residues 3 to 167 and 180 to 353; these read PVIA…YAGE and IKIA…AAAM. Residues 9 to 16, 56 to 60, 119 to 122, 186 to 193, 233 to 237, and 298 to 301 contribute to the GTP site; these read GRPNVGKS, DTGGF, NKAE, DTAGL, and NKWD. The 85-residue stretch at 354-438 folds into the KH-like domain; that stretch reads KKLPTPKLTR…PLRIEFRSST (85 aa).

Belongs to the TRAFAC class TrmE-Era-EngA-EngB-Septin-like GTPase superfamily. EngA (Der) GTPase family. In terms of assembly, associates with the 50S ribosomal subunit.

Functionally, GTPase that plays an essential role in the late steps of ribosome biogenesis. In Burkholderia pseudomallei (strain 1106a), this protein is GTPase Der.